The primary structure comprises 565 residues: Sulfite reductase [NADPH] hemoprotein beta-component (565 aa).

[4Fe-4S] cluster-binding residues include cysteine 429, cysteine 435, cysteine 474, and cysteine 478. Cysteine 478 provides a ligand contact to siroheme.

The protein belongs to the nitrite and sulfite reductase 4Fe-4S domain family. As to quaternary structure, alpha(8)-beta(8). The alpha component is a flavoprotein, the beta component is a hemoprotein. Siroheme serves as cofactor. [4Fe-4S] cluster is required as a cofactor.

The enzyme catalyses hydrogen sulfide + 3 NADP(+) + 3 H2O = sulfite + 3 NADPH + 4 H(+). It functions in the pathway sulfur metabolism; hydrogen sulfide biosynthesis; hydrogen sulfide from sulfite (NADPH route): step 1/1. Component of the sulfite reductase complex that catalyzes the 6-electron reduction of sulfite to sulfide. This is one of several activities required for the biosynthesis of L-cysteine from sulfate. The protein is Sulfite reductase [NADPH] hemoprotein beta-component of Shewanella halifaxensis (strain HAW-EB4).